A 466-amino-acid chain; its full sequence is Ribulose bisphosphate carboxylase large chain (466 aa).

An N6,N6,N6-trimethyllysine modification is found at Lys-5. Positions 114 and 164 each coordinate substrate. Lys-166 (proton acceptor) is an active-site residue. Residue Lys-168 coordinates substrate. Positions 192, 194, and 195 each coordinate Mg(2+). An N6-carboxylysine modification is found at Lys-192. His-285 serves as the catalytic Proton acceptor. Residues Arg-286, His-318, and Ser-370 each contribute to the substrate site.

It belongs to the RuBisCO large chain family. Type I subfamily. Heterohexadecamer of 8 large chains and 8 small chains. It depends on Mg(2+) as a cofactor.

It is found in the plastid. The protein resides in the chloroplast. The catalysed reaction is 2 (2R)-3-phosphoglycerate + 2 H(+) = D-ribulose 1,5-bisphosphate + CO2 + H2O. The enzyme catalyses D-ribulose 1,5-bisphosphate + O2 = 2-phosphoglycolate + (2R)-3-phosphoglycerate + 2 H(+). RuBisCO catalyzes two reactions: the carboxylation of D-ribulose 1,5-bisphosphate, the primary event in carbon dioxide fixation, as well as the oxidative fragmentation of the pentose substrate in the photorespiration process. Both reactions occur simultaneously and in competition at the same active site. The polypeptide is Ribulose bisphosphate carboxylase large chain (Drosera regia (King sundew)).